The sequence spans 300 residues: UDP-3-O-acyl-N-acetylglucosamine deacetylase (300 aa).

H78, H237, and D241 together coordinate Zn(2+). The active-site Proton donor is H264.

It belongs to the LpxC family. Zn(2+) serves as cofactor.

The catalysed reaction is a UDP-3-O-[(3R)-3-hydroxyacyl]-N-acetyl-alpha-D-glucosamine + H2O = a UDP-3-O-[(3R)-3-hydroxyacyl]-alpha-D-glucosamine + acetate. It participates in glycolipid biosynthesis; lipid IV(A) biosynthesis; lipid IV(A) from (3R)-3-hydroxytetradecanoyl-[acyl-carrier-protein] and UDP-N-acetyl-alpha-D-glucosamine: step 2/6. Catalyzes the hydrolysis of UDP-3-O-myristoyl-N-acetylglucosamine to form UDP-3-O-myristoylglucosamine and acetate, the committed step in lipid A biosynthesis. The chain is UDP-3-O-acyl-N-acetylglucosamine deacetylase from Acinetobacter baumannii (strain AB307-0294).